We begin with the raw amino-acid sequence, 547 residues long: ATP synthase subunit alpha (547 aa).

173–180 provides a ligand contact to ATP; that stretch reads GDRATGKT. The disordered stretch occupies residues 526–547; it reads PEAEALADEDVEQEQIVRQKRG. The span at 528-538 shows a compositional bias: acidic residues; sequence AEALADEDVEQ.

The protein belongs to the ATPase alpha/beta chains family. As to quaternary structure, F-type ATPases have 2 components, CF(1) - the catalytic core - and CF(0) - the membrane proton channel. CF(1) has five subunits: alpha(3), beta(3), gamma(1), delta(1), epsilon(1). CF(0) has three main subunits: a(1), b(2) and c(9-12). The alpha and beta chains form an alternating ring which encloses part of the gamma chain. CF(1) is attached to CF(0) by a central stalk formed by the gamma and epsilon chains, while a peripheral stalk is formed by the delta and b chains.

It is found in the cell membrane. It carries out the reaction ATP + H2O + 4 H(+)(in) = ADP + phosphate + 5 H(+)(out). In terms of biological role, produces ATP from ADP in the presence of a proton gradient across the membrane. The alpha chain is a regulatory subunit. This Nocardioides sp. (strain ATCC BAA-499 / JS614) protein is ATP synthase subunit alpha.